The chain runs to 284 residues: Tropomyosin Por p 1.0101 (284 aa).

The residue at position 1 (M1) is an N-acetylmethionine. The disordered stretch occupies residues 1 to 21 (MDAIKKKMQAMKLEKDDAMDR). Residues 1-280 (MDAIKKKMQA…TDELDQAFSE (280 aa)) are a coiled coil. The span at 12–21 (KLEKDDAMDR) shows a compositional bias: basic and acidic residues.

Belongs to the tropomyosin family. Homodimer. As to expression, expressed in muscle (at protein level). Expressed in pincer muscles.

Its function is as follows. Tropomyosin, in association with the troponin complex, plays a central role in the calcium dependent regulation of muscle contraction. The sequence is that of Tropomyosin Por p 1.0101 from Portunus pelagicus (Blue swimmer crab).